Here is a 264-residue protein sequence, read N- to C-terminus: Thiazole synthase (264 aa).

Lys100 serves as the catalytic Schiff-base intermediate with DXP. 1-deoxy-D-xylulose 5-phosphate is bound by residues Gly161, 187-188, and 209-210; these read AG and NT.

The protein belongs to the ThiG family. Homotetramer. Forms heterodimers with either ThiH or ThiS.

It localises to the cytoplasm. It carries out the reaction [ThiS sulfur-carrier protein]-C-terminal-Gly-aminoethanethioate + 2-iminoacetate + 1-deoxy-D-xylulose 5-phosphate = [ThiS sulfur-carrier protein]-C-terminal Gly-Gly + 2-[(2R,5Z)-2-carboxy-4-methylthiazol-5(2H)-ylidene]ethyl phosphate + 2 H2O + H(+). It functions in the pathway cofactor biosynthesis; thiamine diphosphate biosynthesis. Its function is as follows. Catalyzes the rearrangement of 1-deoxy-D-xylulose 5-phosphate (DXP) to produce the thiazole phosphate moiety of thiamine. Sulfur is provided by the thiocarboxylate moiety of the carrier protein ThiS. In vitro, sulfur can be provided by H(2)S. The sequence is that of Thiazole synthase from Nitrosospira multiformis (strain ATCC 25196 / NCIMB 11849 / C 71).